A 146-amino-acid chain; its full sequence is Ribosomal RNA large subunit methyltransferase H (146 aa).

S-adenosyl-L-methionine is bound by residues Leu68, Gly95, and 114–119; that span reads LSSLTF.

Belongs to the RNA methyltransferase RlmH family. Homodimer.

The protein resides in the cytoplasm. The enzyme catalyses pseudouridine(1915) in 23S rRNA + S-adenosyl-L-methionine = N(3)-methylpseudouridine(1915) in 23S rRNA + S-adenosyl-L-homocysteine + H(+). Its function is as follows. Specifically methylates the pseudouridine at position 1915 (m3Psi1915) in 23S rRNA. The polypeptide is Ribosomal RNA large subunit methyltransferase H (Thermodesulfovibrio yellowstonii (strain ATCC 51303 / DSM 11347 / YP87)).